A 1137-amino-acid polypeptide reads, in one-letter code: Protein sel-1 homolog 3 (1137 aa).

The segment at 1–42 (MQWRGAGLWWPRRRQQQQQQQPPPPAFGPPAAAMVPPSRGVS) is disordered. N-linked (GlcNAc...) asparagine glycans are attached at residues asparagine 206 and asparagine 387. Sel1-like repeat units lie at residues 575–609 (HKAS…GQGS), 611–647 (RLSS…TKTP), 694–730 (AAAQ…LETE), 732–767 (PALI…SKGL), 768–800 (HQAV…EMGN), 801–839 (PDAS…QGGH), and 840–877 (IEGT…EKNG). Residue serine 613 is modified to Phosphoserine. An N-linked (GlcNAc...) asparagine glycan is attached at asparagine 942. The Sel1-like 8 repeat unit spans residues 952 to 988 (SFAYLKMGDLYYYGHQNQSQDLELSVQMYAQAALDGD). Residues 1067 to 1087 (LIYFLGTFLLSVVIAWMVLYL) form a helical membrane-spanning segment. Residues 1100-1137 (AWVSADPTSSTPSPAVPPAADASDHDPPMMANGPEPRG) form a disordered region. The span at 1102 to 1120 (VSADPTSSTPSPAVPPAAD) shows a compositional bias: low complexity.

It localises to the membrane. In Mus musculus (Mouse), this protein is Protein sel-1 homolog 3 (Sel1l3).